Here is a 142-residue protein sequence, read N- to C-terminus: Biogenesis of lysosome-related organelles complex 1 subunit 2 (142 aa).

Residues 1 to 33 form a disordered region; sequence MAAAAEGVLATRSDEPARDDAAVETAEEAKEPA. At alanine 2 the chain carries N-acetylalanine. Basic and acidic residues predominate over residues 12–33; that stretch reads RSDEPARDDAAVETAEEAKEPA. A coiled-coil region spans residues 79-127; that stretch reads EMKDIAINISRNLKDLNQKYAGLQPYLDQINVIEEQVAALEQAAYKLDA.

The protein belongs to the BLOC1S2 family. As to quaternary structure, component of the biogenesis of lysosome-related organelles complex 1 (BLOC-1) composed of BLOC1S1, BLOC1S2, BLOC1S3, BLOC1S4, BLOC1S5, BLOC1S6, DTNBP1/BLOC1S7 and SNAPIN/BLOC1S8. Octamer composed of one copy each BLOC1S1, BLOC1S2, BLOC1S3, BLOC1S4, BLOC1S5, BLOC1S6, DTNBP1/BLOC1S7 and SNAPIN/BLOC1S8. Interacts directly with BLOC1S1, BLOC1S3, BLOC1S4, BLOC1S5 and SNAPIN. The BLOC-1 complex associates with the AP-3 protein complex and membrane protein cargos. Component of the BLOC-one-related complex (BORC) which is composed of BLOC1S1, BLOC1S2, BORCS5, BORCS6, BORCS7, BORCS8, KXD1 and SNAPIN. Interacts with gamma-tubulin. Interacts with IFT57. As to expression, isoform 1 and isoform 2 are widely expressed. Expressed in various malignant tumor tissues (at protein level).

The protein localises to the cytoplasm. The protein resides in the cytoskeleton. It is found in the microtubule organizing center. Its subcellular location is the centrosome. It localises to the lysosome membrane. Functionally, component of the BLOC-1 complex, a complex that is required for normal biogenesis of lysosome-related organelles (LRO), such as platelet dense granules and melanosomes. In concert with the AP-3 complex, the BLOC-1 complex is required to target membrane protein cargos into vesicles assembled at cell bodies for delivery into neurites and nerve terminals. The BLOC-1 complex, in association with SNARE proteins, is also proposed to be involved in neurite extension. As part of the BORC complex may play a role in lysosomes movement and localization at the cell periphery. Associated with the cytosolic face of lysosomes, the BORC complex may recruit ARL8B and couple lysosomes to microtubule plus-end-directed kinesin motor. May play a role in cell proliferation. The chain is Biogenesis of lysosome-related organelles complex 1 subunit 2 (BLOC1S2) from Homo sapiens (Human).